The chain runs to 510 residues: Indoleacetate--CoA ligase (510 aa).

Belongs to the ATP-dependent AMP-binding enzyme family. Monomer.

The catalysed reaction is (indol-3-yl)acetate + ATP + CoA = (indol-3-yl)acetyl-CoA + AMP + diphosphate. It carries out the reaction (indol-3-yl)acetate + ATP + H(+) = (indol-3-yl)acetyl-AMP + diphosphate. The enzyme catalyses (indol-3-yl)acetyl-AMP + CoA = (indol-3-yl)acetyl-CoA + AMP + H(+). With respect to regulation, inhibited by high concentrations of substrates, and by the synthetic auxin compound 2,4-dichlorophenoxyacetate (2,4-D), which does not serve as substrate. Functionally, involved in degradation of indoleacetate, the most common member of the auxin class of plant hormones. Highly specific indoleacetate-CoA ligase which catalyzes the ATP-dependent activation of indoleacetate (IAA) to indoleacetyl-CoA. Also activates some closely related compounds such as the non-physiological compound (2-naphthyl)acetate and phenylacetate, which seems to be a fortuitous substrate for IaaB. The chain is Indoleacetate--CoA ligase from Aromatoleum aromaticum (strain DSM 19018 / LMG 30748 / EbN1) (Azoarcus sp. (strain EbN1)).